The following is a 238-amino-acid chain: 3-dehydroquinate dehydratase (238 aa).

3-dehydroquinate is bound by residues 35-37 (ELR) and arginine 70. The Proton donor/acceptor role is filled by histidine 133. The active-site Schiff-base intermediate with substrate is lysine 160. 3-dehydroquinate-binding residues include arginine 202 and glutamine 225.

It belongs to the type-I 3-dehydroquinase family. Homodimer.

It carries out the reaction 3-dehydroquinate = 3-dehydroshikimate + H2O. Its pathway is metabolic intermediate biosynthesis; chorismate biosynthesis; chorismate from D-erythrose 4-phosphate and phosphoenolpyruvate: step 3/7. In terms of biological role, involved in the third step of the chorismate pathway, which leads to the biosynthesis of aromatic amino acids. Catalyzes the cis-dehydration of 3-dehydroquinate (DHQ) and introduces the first double bond of the aromatic ring to yield 3-dehydroshikimate. The protein is 3-dehydroquinate dehydratase of Staphylococcus aureus (strain MRSA252).